The primary structure comprises 37 residues: Cytochrome b6-f complex subunit 5 (37 aa).

A helical transmembrane segment spans residues 5-25; sequence FLFGIVLGLIPVTLAGLFVTA.

The protein belongs to the PetG family. As to quaternary structure, the 4 large subunits of the cytochrome b6-f complex are cytochrome b6, subunit IV (17 kDa polypeptide, PetD), cytochrome f and the Rieske protein, while the 4 small subunits are PetG, PetL, PetM and PetN. The complex functions as a dimer.

It is found in the plastid. Its subcellular location is the chloroplast thylakoid membrane. Functionally, component of the cytochrome b6-f complex, which mediates electron transfer between photosystem II (PSII) and photosystem I (PSI), cyclic electron flow around PSI, and state transitions. PetG is required for either the stability or assembly of the cytochrome b6-f complex. The sequence is that of Cytochrome b6-f complex subunit 5 from Daucus carota (Wild carrot).